The chain runs to 123 residues: Potassium voltage-gated channel subfamily E member 2 (123 aa).

N-linked (GlcNAc...) asparagine glycans are attached at residues asparagine 6 and asparagine 29. A helical membrane pass occupies residues 49-69 (VILYLMVMIGMFSFIVVAILV). Residues 70–123 (STVKSKRREHSQHPYHQYIVEDWQEKYKSQILHLEDSKATIHENMGATGFTVSP) are Cytoplasmic-facing.

Belongs to the potassium channel KCNE family. Interacts with KCNB1. Associates with KCNH2/ERG1. May associate with KCNQ2 and KCNQ3. Associates with HCN1 and probably HCN2. Heteromultimer with KCNC2. Interacts with KCNC2. Interacts with KCNQ1. Forms a heterooligomer complex with KCNQ1 that targets to the membrane raft and leading to currents with an apparently instantaneous activation, a rapid deactivation process and a linear current-voltage relationship and decreases the amplitude of the outward current.

The protein localises to the cell membrane. It localises to the apical cell membrane. In terms of biological role, ancillary protein that functions as a regulatory subunit of the voltage-gated potassium (Kv) channel complex composed of pore-forming and potassium-conducting alpha subunits and of regulatory beta subunits. KCNE2 beta subunit modulates the gating kinetics and enhances stability of the channel complex. Alters the gating of the delayed rectifier Kv channel containing KCNB1 alpha subunit. Associates with KCNH2/HERG alpha subunit Kv channel to form the rapidly activating component of the delayed rectifying potassium current (IKr) in heart. May associate with KCNQ2 and/or KCNQ3 alpha subunits to modulate the native M-type current. May associate with HCN1 and HCN2 channel subunits to increase potassium current. Forms a heterooligomer complex with KCNQ1/KVLQT1 alpha subunits which leads to currents with an apparently instantaneous activation, a rapid deactivation process and a linear current-voltage relationship and decreases the amplitude of the outward current. KCNQ1-KCNE2 channel associates with Na(+)-coupled myo-inositol symporter in the apical membrane of choroid plexus epithelium and regulates the myo-inositol gradient between blood and cerebrospinal fluid with an impact on neuron excitability. This is Potassium voltage-gated channel subfamily E member 2 from Mus musculus (Mouse).